A 520-amino-acid chain; its full sequence is Sodium-dependent dicarboxylate transporter SdcS (520 aa).

Helical transmembrane passes span 30–50, 55–75, 77–97, 104–124, 160–180, 207–227, 242–262, 298–318, 323–343, 362–382, 399–419, 428–448, 452–472, and 491–511; these read AGQL…LLFF, LPWK…WWIT, AIPI…GHIL, SEYG…AIAM, SMFV…LAII, IGYA…PLII, FAKW…ITWL, KVVQ…EFLL, VTSS…LFII, ELPW…KGIS, GVSP…LTEV, MILP…LLLM, AMAA…AIIF, and LISA…VLGI.

Belongs to the SLC13A/DASS transporter (TC 2.A.47) family. NADC subfamily.

Its subcellular location is the cell membrane. In terms of biological role, mediates the transport of the dicarboxylates fumarate, malate, and succinate across the cytoplasmic membrane via a Na(+)-electrochemical gradient. The chain is Sodium-dependent dicarboxylate transporter SdcS (sdcS) from Staphylococcus aureus (strain USA300).